A 139-amino-acid chain; its full sequence is Actin-depolymerizing factor 1 (139 aa).

The ADF-H domain maps to 5–139; sequence ASGMAVHDDC…GLDVIQSRAN (135 aa).

This sequence belongs to the actin-binding proteins ADF family.

Functionally, actin-depolymerizing protein. Severs actin filaments (F-actin) and binds to actin monomers. The polypeptide is Actin-depolymerizing factor 1 (ADF1) (Petunia hybrida (Petunia)).